The following is a 350-amino-acid chain: S-adenosylmethionine:tRNA ribosyltransferase-isomerase (350 aa).

It belongs to the QueA family. Monomer.

The protein resides in the cytoplasm. It catalyses the reaction 7-aminomethyl-7-carbaguanosine(34) in tRNA + S-adenosyl-L-methionine = epoxyqueuosine(34) in tRNA + adenine + L-methionine + 2 H(+). Its pathway is tRNA modification; tRNA-queuosine biosynthesis. Its function is as follows. Transfers and isomerizes the ribose moiety from AdoMet to the 7-aminomethyl group of 7-deazaguanine (preQ1-tRNA) to give epoxyqueuosine (oQ-tRNA). This chain is S-adenosylmethionine:tRNA ribosyltransferase-isomerase, found in Vibrio vulnificus (strain CMCP6).